The primary structure comprises 578 residues: Tetratricopeptide repeat protein 39A (578 aa).

TPR repeat units follow at residues 280–313 (AIFL…QQHW), 470–503 (CLVK…EKKI), and 511–544 (PNAL…YKNY).

It belongs to the TTC39 family.

The chain is Tetratricopeptide repeat protein 39A (Ttc39a) from Mus musculus (Mouse).